A 296-amino-acid chain; its full sequence is MSTRLISGSAVALVTPFRQDCSVDTVALRQLVRFHIAAGTDIIIPCGTTGESPTLSMEEQSRIIRTVKEEAGEQIMVAAGAGTNATDHAVELAKNAEKAGASAILSVAPYYNKPSQEGIYQHYARIAEAVSVPIIIYNVPGRTGSNVAASTILRLARDFGNIAAVKEASDNMAQITELLEERPENFSVLTGEDMLILPFMAMGGDGVISVAANQVPSAVKRLVEAARTGRLDEARAINTRYRRLFRLNFIESNPVPVKYALALMGMIEEVYRLPLVPLADENKRILKEELQSLGLV.

Residue threonine 49 participates in pyruvate binding. Tyrosine 137 functions as the Proton donor/acceptor in the catalytic mechanism. Lysine 166 acts as the Schiff-base intermediate with substrate in catalysis. Isoleucine 208 is a pyruvate binding site.

The protein belongs to the DapA family. In terms of assembly, homotetramer; dimer of dimers.

Its subcellular location is the cytoplasm. The catalysed reaction is L-aspartate 4-semialdehyde + pyruvate = (2S,4S)-4-hydroxy-2,3,4,5-tetrahydrodipicolinate + H2O + H(+). It participates in amino-acid biosynthesis; L-lysine biosynthesis via DAP pathway; (S)-tetrahydrodipicolinate from L-aspartate: step 3/4. Functionally, catalyzes the condensation of (S)-aspartate-beta-semialdehyde [(S)-ASA] and pyruvate to 4-hydroxy-tetrahydrodipicolinate (HTPA). In Chlorobium limicola (strain DSM 245 / NBRC 103803 / 6330), this protein is 4-hydroxy-tetrahydrodipicolinate synthase.